Here is a 169-residue protein sequence, read N- to C-terminus: Disulfide bond formation protein B (169 aa).

Residues 1 to 13 (MQALNHFSRIRLS) lie on the Cytoplasmic side of the membrane. The chain crosses the membrane as a helical span at residues 14–30 (WFLLLLCIIFFEASALT). The Periplasmic segment spans residues 31–48 (FQHIMKLPPCVMCIYERV). An intrachain disulfide couples Cys40 to Cys43. A helical transmembrane segment spans residues 49 to 64 (AMMGIGGAAIIGLLNP). Topologically, residues 65 to 71 (NNLIIRW) are cytoplasmic. A helical membrane pass occupies residues 72–89 (CGFIAWGISAGWGLKLAL). Topologically, residues 90–144 (EHVDFQLNPSPFSTCDLFVTFPSWAPLNKWAPWMFEAYGDCSKIVWQFLTLTMPQ) are periplasmic. Cysteines 104 and 130 form a disulfide. Residues 145–163 (WLVIIFAGNLIALAIFVIA) traverse the membrane as a helical segment. Topologically, residues 164-169 (QFFNKK) are cytoplasmic.

It belongs to the DsbB family.

The protein localises to the cell inner membrane. Its function is as follows. Required for disulfide bond formation in some periplasmic proteins. Acts by oxidizing the DsbA protein. This is Disulfide bond formation protein B from Aliivibrio fischeri (strain ATCC 700601 / ES114) (Vibrio fischeri).